We begin with the raw amino-acid sequence, 343 residues long: L-threonine 3-dehydrogenase (343 aa).

Position 40 (C40) interacts with Zn(2+). Active-site charge relay system residues include T42 and H45. Zn(2+) is bound by residues H65, E66, C95, C98, C101, and C109. NAD(+) is bound by residues I177, D197, R202, 264-266, and 288-289; these read LGI and IY.

Belongs to the zinc-containing alcohol dehydrogenase family. Homotetramer. It depends on Zn(2+) as a cofactor.

It localises to the cytoplasm. The catalysed reaction is L-threonine + NAD(+) = (2S)-2-amino-3-oxobutanoate + NADH + H(+). Its pathway is amino-acid degradation; L-threonine degradation via oxydo-reductase pathway; glycine from L-threonine: step 1/2. In terms of biological role, catalyzes the NAD(+)-dependent oxidation of L-threonine to 2-amino-3-ketobutyrate. In Aliivibrio fischeri (strain MJ11) (Vibrio fischeri), this protein is L-threonine 3-dehydrogenase.